The sequence spans 259 residues: AA9 family lytic polysaccharide monooxygenase E (259 aa).

The signal sequence occupies residues 1–20 (MKATVLAGLAAVIAAQGVAG). 2 residues coordinate Cu(2+): His-21 and His-99. Cysteines 69 and 193 form a disulfide. Residues His-179 and Gln-188 each coordinate O2. Tyr-190 lines the Cu(2+) pocket.

The protein belongs to the polysaccharide monooxygenase AA9 family. The cofactor is Cu(2+).

Its subcellular location is the secreted. It carries out the reaction [(1-&gt;4)-beta-D-glucosyl]n+m + reduced acceptor + O2 = 4-dehydro-beta-D-glucosyl-[(1-&gt;4)-beta-D-glucosyl]n-1 + [(1-&gt;4)-beta-D-glucosyl]m + acceptor + H2O.. Functionally, lytic polysaccharide monooxygenase (LPMO) that depolymerizes crystalline and amorphous polysaccharides via the oxidation of scissile alpha- or beta-(1-4)-glycosidic bonds, yielding C1 or C4 oxidation products. Catalysis by LPMOs requires the reduction of the active-site copper from Cu(II) to Cu(I) by a reducing agent and H(2)O(2) or O(2) as a cosubstrate. The chain is AA9 family lytic polysaccharide monooxygenase E from Malbranchea cinnamomea (Thermophilic fungus).